Here is a 491-residue protein sequence, read N- to C-terminus: Probable glycine dehydrogenase (decarboxylating) subunit 2 (491 aa).

An N6-(pyridoxal phosphate)lysine modification is found at lysine 264.

Belongs to the GcvP family. C-terminal subunit subfamily. In terms of assembly, the glycine cleavage system is composed of four proteins: P, T, L and H. In this organism, the P 'protein' is a heterodimer of two subunits. Requires pyridoxal 5'-phosphate as cofactor.

The catalysed reaction is N(6)-[(R)-lipoyl]-L-lysyl-[glycine-cleavage complex H protein] + glycine + H(+) = N(6)-[(R)-S(8)-aminomethyldihydrolipoyl]-L-lysyl-[glycine-cleavage complex H protein] + CO2. Functionally, the glycine cleavage system catalyzes the degradation of glycine. The P protein binds the alpha-amino group of glycine through its pyridoxal phosphate cofactor; CO(2) is released and the remaining methylamine moiety is then transferred to the lipoamide cofactor of the H protein. This chain is Probable glycine dehydrogenase (decarboxylating) subunit 2, found in Coxiella burnetii (strain CbuK_Q154) (Coxiella burnetii (strain Q154)).